The following is a 275-amino-acid chain: MKIVVAKNIGFCFGVERAIRTVEELLDEGKKVVTDGEIVHNKQVMEQLTKKGLKVSSEMTDGEVFVVRAHGIPKDRLEELKKIFPEVVDLTCPIVSQLFKTAQRYAKERKVIVFGKEDHPEMVALRGYAPAIVTKVPFKFEEKKVVFLSQTTSSLEEYKEFVAAMIRMNEFEEAVFLNTICPVTVNREREVEELSKICDLSIVVGGKHSSNTGKLFRIASKHSKTIWIESPDELPADVVKYGTVCVFSGTSTPNSLIENVVRKLKEMEGKRDGTI.

Residue cysteine 12 participates in [4Fe-4S] cluster binding. Residues histidine 40 and histidine 70 each contribute to the (2E)-4-hydroxy-3-methylbut-2-enyl diphosphate site. The dimethylallyl diphosphate site is built by histidine 40 and histidine 70. Residues histidine 40 and histidine 70 each coordinate isopentenyl diphosphate. Cysteine 92 provides a ligand contact to [4Fe-4S] cluster. Histidine 119 lines the (2E)-4-hydroxy-3-methylbut-2-enyl diphosphate pocket. Position 119 (histidine 119) interacts with dimethylallyl diphosphate. Histidine 119 contacts isopentenyl diphosphate. The active-site Proton donor is the glutamate 121. Threonine 151 contributes to the (2E)-4-hydroxy-3-methylbut-2-enyl diphosphate binding site. Cysteine 181 is a binding site for [4Fe-4S] cluster. Serine 209, serine 210, asparagine 211, and serine 251 together coordinate (2E)-4-hydroxy-3-methylbut-2-enyl diphosphate. Positions 209, 210, 211, and 251 each coordinate dimethylallyl diphosphate. Serine 209, serine 210, asparagine 211, and serine 251 together coordinate isopentenyl diphosphate.

This sequence belongs to the IspH family. [4Fe-4S] cluster serves as cofactor.

It catalyses the reaction isopentenyl diphosphate + 2 oxidized [2Fe-2S]-[ferredoxin] + H2O = (2E)-4-hydroxy-3-methylbut-2-enyl diphosphate + 2 reduced [2Fe-2S]-[ferredoxin] + 2 H(+). The enzyme catalyses dimethylallyl diphosphate + 2 oxidized [2Fe-2S]-[ferredoxin] + H2O = (2E)-4-hydroxy-3-methylbut-2-enyl diphosphate + 2 reduced [2Fe-2S]-[ferredoxin] + 2 H(+). It functions in the pathway isoprenoid biosynthesis; dimethylallyl diphosphate biosynthesis; dimethylallyl diphosphate from (2E)-4-hydroxy-3-methylbutenyl diphosphate: step 1/1. The protein operates within isoprenoid biosynthesis; isopentenyl diphosphate biosynthesis via DXP pathway; isopentenyl diphosphate from 1-deoxy-D-xylulose 5-phosphate: step 6/6. Catalyzes the conversion of 1-hydroxy-2-methyl-2-(E)-butenyl 4-diphosphate (HMBPP) into a mixture of isopentenyl diphosphate (IPP) and dimethylallyl diphosphate (DMAPP). Acts in the terminal step of the DOXP/MEP pathway for isoprenoid precursor biosynthesis. This chain is 4-hydroxy-3-methylbut-2-enyl diphosphate reductase, found in Thermotoga sp. (strain RQ2).